The following is a 387-amino-acid chain: 4-hydroxy-3-methylbut-2-en-1-yl diphosphate synthase (flavodoxin) (387 aa).

[4Fe-4S] cluster-binding residues include Cys-280, Cys-283, Cys-315, and Glu-322.

It belongs to the IspG family. [4Fe-4S] cluster is required as a cofactor.

It carries out the reaction (2E)-4-hydroxy-3-methylbut-2-enyl diphosphate + oxidized [flavodoxin] + H2O + 2 H(+) = 2-C-methyl-D-erythritol 2,4-cyclic diphosphate + reduced [flavodoxin]. It participates in isoprenoid biosynthesis; isopentenyl diphosphate biosynthesis via DXP pathway; isopentenyl diphosphate from 1-deoxy-D-xylulose 5-phosphate: step 5/6. Converts 2C-methyl-D-erythritol 2,4-cyclodiphosphate (ME-2,4cPP) into 1-hydroxy-2-methyl-2-(E)-butenyl 4-diphosphate. This is 4-hydroxy-3-methylbut-2-en-1-yl diphosphate synthase (flavodoxin) from Mycobacterium bovis (strain ATCC BAA-935 / AF2122/97).